The sequence spans 472 residues: 2-oxoisovalerate dehydrogenase subunit alpha 1, mitochondrial (472 aa).

The N-terminal 56 residues, 1–56, are a transit peptide targeting the mitochondrion; sequence MAIWFARSKTLVSSLRHNLNLSTILIKRDYSHRPIFYTTSQLSSTAYLSPFGSLRH. A thiamine diphosphate-binding site is contributed by 185–187; it reads QYR. Ser-234, Thr-239, and Gln-240 together coordinate K(+).

It belongs to the BCKDHA family. As to quaternary structure, heterotetramer of alpha and beta chains. The cofactor is thiamine diphosphate.

The protein localises to the mitochondrion matrix. The catalysed reaction is N(6)-[(R)-lipoyl]-L-lysyl-[protein] + 3-methyl-2-oxobutanoate + H(+) = N(6)-[(R)-S(8)-2-methylpropanoyldihydrolipoyl]-L-lysyl-[protein] + CO2. The branched-chain alpha-keto dehydrogenase complex catalyzes the overall conversion of alpha-keto acids to acyl-CoA and CO(2). It contains multiple copies of three enzymatic components: branched-chain alpha-keto acid decarboxylase (E1), lipoamide acyltransferase (E2) and lipoamide dehydrogenase (E3). Required during sugar starvation. This Arabidopsis thaliana (Mouse-ear cress) protein is 2-oxoisovalerate dehydrogenase subunit alpha 1, mitochondrial.